The primary structure comprises 101 residues: Urease subunit beta (101 aa).

This sequence belongs to the urease beta subunit family. As to quaternary structure, heterotrimer of UreA (gamma), UreB (beta) and UreC (alpha) subunits. Three heterotrimers associate to form the active enzyme.

It is found in the cytoplasm. The catalysed reaction is urea + 2 H2O + H(+) = hydrogencarbonate + 2 NH4(+). It participates in nitrogen metabolism; urea degradation; CO(2) and NH(3) from urea (urease route): step 1/1. In Roseobacter denitrificans (strain ATCC 33942 / OCh 114) (Erythrobacter sp. (strain OCh 114)), this protein is Urease subunit beta.